Reading from the N-terminus, the 110-residue chain is Movement protein TGB2 (110 aa).

Topologically, residues 1–10 (MSGAHHLTPP) are cytoplasmic. A helical transmembrane segment spans residues 11-34 (TDYGKPVLAASIGISLALLVYTAT). The Lumenal segment spans residues 35-76 (RSTLPHVGDNLHALPHGGRYVDGTKSISYFSPSASKTRDPFP). The chain crosses the membrane as a helical span at residues 77–92 (FAFLLILTLSGLILLL). Residues 93 to 110 (SRRRSNPHSCPSCGTPHA) lie on the Cytoplasmic side of the membrane.

It belongs to the Tymovirales TGBp2 protein family.

It is found in the host endoplasmic reticulum membrane. Its function is as follows. Plays a role in viral cell-to-cell propagation, by facilitating genome transport to neighboring plant cells through plasmosdesmata,. The polypeptide is Movement protein TGB2 (Plantago asiatica (P1AMV)).